A 342-amino-acid polypeptide reads, in one-letter code: Methylthioribose-1-phosphate isomerase (342 aa).

Substrate contacts are provided by residues 49 to 51 (RGA), R86, and Q187. The active-site Proton donor is D228. Position 238–239 (238–239 (NK)) interacts with substrate.

It belongs to the eIF-2B alpha/beta/delta subunits family. MtnA subfamily.

The enzyme catalyses 5-(methylsulfanyl)-alpha-D-ribose 1-phosphate = 5-(methylsulfanyl)-D-ribulose 1-phosphate. The protein operates within amino-acid biosynthesis; L-methionine biosynthesis via salvage pathway; L-methionine from S-methyl-5-thio-alpha-D-ribose 1-phosphate: step 1/6. Functionally, catalyzes the interconversion of methylthioribose-1-phosphate (MTR-1-P) into methylthioribulose-1-phosphate (MTRu-1-P). This Klebsiella pneumoniae (strain 342) protein is Methylthioribose-1-phosphate isomerase.